A 476-amino-acid polypeptide reads, in one-letter code: Glycogen synthase (476 aa).

An ADP-alpha-D-glucose-binding site is contributed by Lys-15.

The protein belongs to the glycosyltransferase 1 family. Bacterial/plant glycogen synthase subfamily.

The catalysed reaction is [(1-&gt;4)-alpha-D-glucosyl](n) + ADP-alpha-D-glucose = [(1-&gt;4)-alpha-D-glucosyl](n+1) + ADP + H(+). The protein operates within glycan biosynthesis; glycogen biosynthesis. Synthesizes alpha-1,4-glucan chains using ADP-glucose. This is Glycogen synthase from Ligilactobacillus salivarius (strain UCC118) (Lactobacillus salivarius).